Consider the following 57-residue polypeptide: Alpha-conotoxin-like Sm1.2 (57 aa).

The N-terminal stretch at 1–16 (MFTVFLLVVLATTVVS) is a signal peptide. Residues 17 to 42 (FPSDRESDGANDEARTDEPEEHGPDR) constitute a propeptide that is removed on maturation. Residues 17–46 (FPSDRESDGANDEARTDEPEEHGPDRNGCC) form a disordered region. Residues 19–41 (SDRESDGANDEARTDEPEEHGPD) are compositionally biased toward basic and acidic residues. 2 disulfides stabilise this stretch: Cys45–Cys51 and Cys46–Cys56. Cys56 bears the Cysteine amide mark.

Belongs to the conotoxin A superfamily. In terms of tissue distribution, expressed by the venom duct.

Its subcellular location is the secreted. Functionally, alpha-conotoxins act on postsynaptic membranes, they bind to the nicotinic acetylcholine receptors (nAChR) and thus inhibit them. This Conus stercusmuscarum (Fly-specked cone) protein is Alpha-conotoxin-like Sm1.2.